Here is a 580-residue protein sequence, read N- to C-terminus: Acyl-coenzyme A synthetase ACSM3, mitochondrial (580 aa).

The transit peptide at 1–21 directs the protein to the mitochondrion; that stretch reads MVMLLRARCFQRLAIPDPMRV. N6-succinyllysine occurs at positions 67 and 100. Lys151 is modified (N6-acetyllysine). ATP contacts are provided by residues 229–237, 368–373, Asp455, Arg470, and Lys566; these read TSGTTGPPK and EGYGQT.

This sequence belongs to the ATP-dependent AMP-binding enzyme family. Requires Mg(2+) as cofactor. The cofactor is Mn(2+). As to expression, detected in kidney (at protein level). Detected in kidney proximal tubules and in liver. Detected at low levels in testis, stomach, heart and lung.

It is found in the mitochondrion. Its subcellular location is the mitochondrion matrix. It catalyses the reaction a medium-chain fatty acid + ATP + CoA = a medium-chain fatty acyl-CoA + AMP + diphosphate. The catalysed reaction is propanoate + ATP + CoA = propanoyl-CoA + AMP + diphosphate. It carries out the reaction butanoate + ATP + CoA = butanoyl-CoA + AMP + diphosphate. The enzyme catalyses 2-methylpropanoate + ATP + CoA = 2-methylpropanoyl-CoA + AMP + diphosphate. It catalyses the reaction 2-methylbutanoate + ATP + CoA = 2-methylbutanoyl-CoA + AMP + diphosphate. The catalysed reaction is octanoate + ATP + CoA = octanoyl-CoA + AMP + diphosphate. Its function is as follows. Catalyzes the activation of fatty acids by CoA to produce an acyl-CoA, the first step in fatty acid metabolism. Capable of activating medium-chain fatty acids with a preference for isobutyrate among fatty acids with 2-6 carbon atoms. The chain is Acyl-coenzyme A synthetase ACSM3, mitochondrial (Acsm3) from Mus musculus (Mouse).